A 776-amino-acid polypeptide reads, in one-letter code: ADP-ribosylation factor GTPase-activating protein AGD2 (776 aa).

Residues 2–226 (AGFINLEDSP…IHQVLTYAQQ (225 aa)) form the BAR domain. Residues 248-267 (QSELDSQQASAKADPSDVGG) form a disordered region. A PH domain is found at 290 to 421 (EVTKQGYLLK…WVNKITAAIT (132 aa)). The 138-residue stretch at 467–604 (DDVLTILREI…ALVVKDEREA (138 aa)) folds into the Arf-GAP domain. Residues 482–505 (CAECNAPDPDWASLNLGVLMCIEC) form a C4-type zinc finger. ANK repeat units follow at residues 683 to 712 (QGCS…DINM) and 716 to 745 (HGRT…RPSI).

In terms of tissue distribution, expressed in roots, hypocotyls, cotyledons, leaf and shoot apical meristems and siliques.

Functionally, probable GTPase-activating protein. The chain is ADP-ribosylation factor GTPase-activating protein AGD2 (AGD2) from Arabidopsis thaliana (Mouse-ear cress).